The sequence spans 264 residues: Thymidylate synthase (264 aa).

Residues R21 and 126–127 (RR) each bind dUMP. Residue C146 is the Nucleophile of the active site. DUMP-binding positions include 166 to 169 (RSAD), N177, and 207 to 209 (HLY). Position 169 (D169) interacts with (6R)-5,10-methylene-5,6,7,8-tetrahydrofolate. A263 serves as a coordination point for (6R)-5,10-methylene-5,6,7,8-tetrahydrofolate.

Belongs to the thymidylate synthase family. Bacterial-type ThyA subfamily. In terms of assembly, homodimer.

The protein resides in the cytoplasm. The catalysed reaction is dUMP + (6R)-5,10-methylene-5,6,7,8-tetrahydrofolate = 7,8-dihydrofolate + dTMP. Its pathway is pyrimidine metabolism; dTTP biosynthesis. In terms of biological role, catalyzes the reductive methylation of 2'-deoxyuridine-5'-monophosphate (dUMP) to 2'-deoxythymidine-5'-monophosphate (dTMP) while utilizing 5,10-methylenetetrahydrofolate (mTHF) as the methyl donor and reductant in the reaction, yielding dihydrofolate (DHF) as a by-product. This enzymatic reaction provides an intracellular de novo source of dTMP, an essential precursor for DNA biosynthesis. The protein is Thymidylate synthase of Afipia carboxidovorans (strain ATCC 49405 / DSM 1227 / KCTC 32145 / OM5) (Oligotropha carboxidovorans).